The sequence spans 234 residues: Synaptogyrin-1 (234 aa).

Met1 carries the post-translational modification N-acetylmethionine. The Cytoplasmic segment spans residues Met1–Gln23. Positions Leu20–Gln173 constitute an MARVEL domain. Residues Pro24–Val44 traverse the membrane as a helical segment. Residues Asn45 to Gly71 lie on the Lumenal side of the membrane. The helical transmembrane segment at Val72–Phe92 threads the bilayer. At Pro93 to Lys103 the chain is on the cytoplasmic side. Residues Ala104–Cys124 traverse the membrane as a helical segment. Residues Tyr125 to Arg148 lie on the Lumenal side of the membrane. A helical membrane pass occupies residues Ala149–Phe169. The Cytoplasmic portion of the chain corresponds to Gln170–Tyr234. The tract at residues Ser192–Tyr234 is disordered. Residues Thr214 to Tyr234 are compositionally biased toward polar residues.

Belongs to the synaptogyrin family.

The protein localises to the cytoplasmic vesicle. It is found in the secretory vesicle. It localises to the synaptic vesicle membrane. Its subcellular location is the melanosome. May play a role in regulated exocytosis. Modulates the localization of synaptophysin/SYP into synaptic-like microvesicles and may therefore play a role in synaptic-like microvesicle formation and/or maturation. Involved in the regulation of short-term and long-term synaptic plasticity. This Pongo abelii (Sumatran orangutan) protein is Synaptogyrin-1.